Reading from the N-terminus, the 373-residue chain is ATP synthase gamma chain 1, chloroplastic (373 aa).

A chloroplast-targeting transit peptide spans 1–50 (MACSNLTTMWVSSKPSLSADSSSLSFRSVLKCPTNTSSPPSRASSVSPLQ). C139 is an active-site residue. C249 and C255 are joined by a disulfide. Phosphoserine is present on S347.

This sequence belongs to the ATPase gamma chain family. F-type ATPases have 2 components, CF(1) - the catalytic core - and CF(0) - the membrane proton channel. CF(1) has five subunits: alpha(3), beta(3), gamma(1), delta(1), epsilon(1). CF(0) has four main subunits: a, b, b' and c. Interacts with PAB.

Its subcellular location is the plastid. The protein localises to the chloroplast thylakoid membrane. Produces ATP from ADP in the presence of a proton gradient across the membrane. The gamma chain is believed to be important in regulating ATPase activity and the flow of protons through the CF(0) complex. In Arabidopsis thaliana (Mouse-ear cress), this protein is ATP synthase gamma chain 1, chloroplastic (ATPC1).